A 328-amino-acid chain; its full sequence is UDP-glucose 4-epimerase (328 aa).

Residue Thr-119 coordinates substrate. Tyr-143 (proton acceptor) is an active-site residue.

This sequence belongs to the NAD(P)-dependent epimerase/dehydratase family. It depends on NAD(+) as a cofactor.

It carries out the reaction UDP-alpha-D-glucose = UDP-alpha-D-galactose. It functions in the pathway carbohydrate metabolism; galactose metabolism. Its pathway is glycan metabolism; exopolysaccharide biosynthesis. The sequence is that of UDP-glucose 4-epimerase (exoB) from Rhizobium meliloti (strain 1021) (Ensifer meliloti).